Here is a 1181-residue protein sequence, read N- to C-terminus: MAAVQVVGSLPSGQLREAPRDAIPEGGNGFRRLSARLCALRPDDSSSARTEIHLLFDQLISENYSEGSGVAPEDVSALLVQACRLVPLNQNHLVSKVSQLIHHLLNRLQVIVDEQRLDFLLAYTISAIHQCSSWTHMEILQALAALVYCNGSKCQKYLLELLGETGLLMKLSDLAQSDPEVRRAAVHCMANLCLSVPGQPYLEEPYQNVCFQAFLTILQSPKSSDMDDITFCMLLQNALKGIQSLLNGGRMKLTQTDELGALLAVLKKFMFHGLPGLNIEMPMVLYPTPLPQYDGRTPIKPQQSESSASRPTLNKKKKSKVKPKKIQQGEEEEKESSGEIEAAPVTGTGRVNLHEGNTWCPSSLGVQSLPLDGSGAAGKDGVSSPFSSSSWKRVSSSESDFSDAEGGMQSKMRSYQAKVRQVALVCFLSTIKSIEKKVLYGYWSAFIPDTPELGSPQSVSLMTLTLKDPSPKTRACALQVLSAILEGSKQFLSVAEDTSDHRRAFTPFSVMIASSIRELHRCLLLALVAESSSQTLTQIIKCLANLVSDAPYDRLKLSLLTKVWNQIKPYIRHKDVNVRVSSLTLLGAIVSTHAPLPEVQLLLQQPCSSGLSNSNSATPHLSPPDWWKKAPAGPSLEETSVSSPKGSSEPCWLIRLCISIVVLPKEDSCSGSDAGSAAGSTYEPSPMRLEALQVLTLLARGYFSMTQAYLMELGEVICKCMGEADPSIQLHGAKLLEELGTGLIQQYKPDSTAAPDQRAPVFLVVMFWTMMLNGPLPRALQNSEHPTLQAGACDALSSILPEAFSNLPKDRQILCITVLLGLNDSKNRLVKAATSRALGVYVLFPCLRQDVIFVADTANAILMSLEDKSLNVRANAAWSLGNLTDTLIVNMETPDPSFQEEFSGLLLLKMLRSAIEASKDKDKVKSNAVRALGNLLHFLQPSHIEKPTFAEIIEESIQALISTVLTEAAMKVRWNACYAMGNVFKNPALPLGTAPWTSQAYNALTSVVTSCKNFKVRIRSAAALSVPGKREQYGSVDQYAGIWNALVTALQKSEDTRDFLEFKYCASLRTQICQALIHLLNLASASDLPCIKETLELNGNMVQSYILQFIKSGAEGDDTGAPHSPQERDQMVRMALKHMGSIQAPTGDTARRAVMGFLEEILAVCFDSSGSQGALPGLTNQ.

Residues 159–198 form an HEAT 1 repeat; that stretch reads LELLGETGLLMKLSDLAQSDPEVRRAAVHCMANLCLSVPG. Disordered stretches follow at residues 294-347 and 371-407; these read DGRT…PVTG and LDGS…AEGG. Residues 300 to 312 show a composition bias toward polar residues; the sequence is KPQQSESSASRPT. Basic residues predominate over residues 313–325; the sequence is LNKKKKSKVKPKK. A phosphoserine mark is found at S336, S337, S399, and S402. The span at 383–399 shows a compositional bias: low complexity; that stretch reads SSPFSSSSWKRVSSSES. 3 HEAT repeats span residues 452-490, 514-552, and 558-595; these read ELGS…GSKQ, SSIR…DAPY, and SLLT…THAP. A disordered region spans residues 613-648; it reads NSNSATPHLSPPDWWKKAPAGPSLEETSVSSPKGSS. T618 bears the Phosphothreonine mark. Residues 637–646 show a composition bias toward polar residues; sequence EETSVSSPKG. S643 carries the phosphoserine modification.

The protein is HEAT repeat-containing protein 6 (HEATR6) of Pongo abelii (Sumatran orangutan).